A 424-amino-acid chain; its full sequence is CinA-like protein (424 aa).

It belongs to the CinA family.

In Prochlorococcus marinus (strain MIT 9301), this protein is CinA-like protein.